The chain runs to 255 residues: MDDREDLVYQAKLAEQAERYDEMVESMKKVAGMDVELTVEERNLLSVAYKNVIGARRASWRIISSIEQKEENKGGEDKLKMIREYRQMVETELKLICCDILDVLDKHLIPAANTGESKVFYYKMKGDYHRYLAEFATGNDRKEAAENSLVAYKAASDIAMTELPPTHPIRLGLALNFSVFYYEILNSPDRACRLAKAAFDDAIAELDTLSEESYKDSTLIMQLLRDNLTLWTSDMQGDGEEQNKEALQDVEDENQ.

Met1 carries the post-translational modification N-acetylmethionine. N6-acetyllysine; alternate is present on Lys50. Lys50 participates in a covalent cross-link: Glycyl lysine isopeptide (Lys-Gly) (interchain with G-Cter in SUMO2); alternate. Ser65 bears the Phosphoserine mark. 3 positions are modified to N6-acetyllysine: Lys69, Lys118, and Lys123. Tyr131 bears the Phosphotyrosine mark. A Phosphothreonine modification is found at Thr137. Ser210 is subject to Phosphoserine. Thr232 bears the Phosphothreonine mark. Residues 234–255 (DMQGDGEEQNKEALQDVEDENQ) form a disordered region.

Belongs to the 14-3-3 family. Homodimer. Heterodimerizes with YWHAZ. Interacts with PKA-phosphorylated AANAT. Interacts with ABL1 (phosphorylated form); the interaction retains it in the cytoplasm. Interacts with ARHGEF28. Interacts with BEX3. Weakly interacts with CDKN1B. Interacts with the 'Thr-369' phosphorylated form of DAPK2. Interacts with DENND1A. Interacts with GAB2. Interacts with phosphorylated GRB10. Interacts with KSR1. Interacts with NDEL1. Interacts with PI4KB, TBC1D22A and TBC1D22B. Interacts with the phosphorylated (by AKT1) form of SRPK2. Interacts with TIAM2. Interacts with the 'Ser-1134' and 'Ser-1161' phosphorylated form of SOS1. Interacts with ZFP36 (via phosphorylated form). Interacts with SLITRK1. Interacts with HSF1 (via phosphorylated form); this interaction promotes HSF1 sequestration in the cytoplasm in a ERK-dependent manner. Interacts with RIPOR2. Interacts with KLHL22; required for the nuclear localization of KLHL22 upon amino acid starvation. Interacts with CRTC1. Interacts with CRTC2 (probably when phosphorylated at 'Ser-171'). Interacts with CRTC3 (probably when phosphorylated at 'Ser-162' and/or 'Ser-273'). Interacts with ATP2B1 and ATP2B3; this interaction inhibits calcium-transporting ATPase activity. Interacts with MEFV. Interacts with RNF115. Interacts with GPR15; this interaction promotes ER-to-Golgi transport of GPR15.

It is found in the nucleus. The protein localises to the cytoplasm. It localises to the melanosome. Its function is as follows. Adapter protein implicated in the regulation of a large spectrum of both general and specialized signaling pathways. Binds to a large number of partners, usually by recognition of a phosphoserine or phosphothreonine motif. Binding generally results in the modulation of the activity of the binding partner. Positively regulates phosphorylated protein HSF1 nuclear export to the cytoplasm. This chain is 14-3-3 protein epsilon (Ywhae), found in Rattus norvegicus (Rat).